The following is a 143-amino-acid chain: Large ribosomal subunit protein uL11 (143 aa).

Belongs to the universal ribosomal protein uL11 family. Part of the ribosomal stalk of the 50S ribosomal subunit. Interacts with L10 and the large rRNA to form the base of the stalk. L10 forms an elongated spine to which L12 dimers bind in a sequential fashion forming a multimeric L10(L12)X complex. In terms of processing, one or more lysine residues are methylated.

In terms of biological role, forms part of the ribosomal stalk which helps the ribosome interact with GTP-bound translation factors. This is Large ribosomal subunit protein uL11 from Azoarcus sp. (strain BH72).